Reading from the N-terminus, the 293-residue chain is 4-hydroxy-tetrahydrodipicolinate synthase (293 aa).

A pyruvate-binding site is contributed by Thr-44. Residue Tyr-132 is the Proton donor/acceptor of the active site. Lys-160 functions as the Schiff-base intermediate with substrate in the catalytic mechanism. Ile-202 provides a ligand contact to pyruvate.

The protein belongs to the DapA family. As to quaternary structure, homotetramer; dimer of dimers.

It localises to the cytoplasm. The catalysed reaction is L-aspartate 4-semialdehyde + pyruvate = (2S,4S)-4-hydroxy-2,3,4,5-tetrahydrodipicolinate + H2O + H(+). It functions in the pathway amino-acid biosynthesis; L-lysine biosynthesis via DAP pathway; (S)-tetrahydrodipicolinate from L-aspartate: step 3/4. Its function is as follows. Catalyzes the condensation of (S)-aspartate-beta-semialdehyde [(S)-ASA] and pyruvate to 4-hydroxy-tetrahydrodipicolinate (HTPA). In Pelagibacter ubique (strain HTCC1062), this protein is 4-hydroxy-tetrahydrodipicolinate synthase.